The chain runs to 279 residues: DegV domain-containing protein spr1019 (279 aa).

Residues 4-277 form the DegV domain; sequence IKIVTDSSVT…ENAWAILIRY (274 aa). Hexadecanoate-binding residues include Thr-62 and Ser-94.

May bind long-chain fatty acids, such as palmitate, and may play a role in lipid transport or fatty acid metabolism. This Streptococcus pneumoniae (strain ATCC BAA-255 / R6) protein is DegV domain-containing protein spr1019.